Reading from the N-terminus, the 102-residue chain is Large ribosomal subunit protein uL24 (102 aa).

It belongs to the universal ribosomal protein uL24 family. Part of the 50S ribosomal subunit.

One of two assembly initiator proteins, it binds directly to the 5'-end of the 23S rRNA, where it nucleates assembly of the 50S subunit. Its function is as follows. One of the proteins that surrounds the polypeptide exit tunnel on the outside of the subunit. The sequence is that of Large ribosomal subunit protein uL24 from Ralstonia pickettii (strain 12J).